The chain runs to 592 residues: Bifunctional purine biosynthesis protein ATIC (592 aa).

An N-acetylmethionine modification is found at Met-1. The MGS-like domain occupies 1–146 (MASSQLALFS…KNHARVTVVC (146 aa)). The tract at residues 1–198 (MASSQLALFS…ISDYFRRQYS (198 aa)) is IMP cyclohydrolase. IMP-binding positions include 12 to 14 (SDK), 34 to 37 (SGGT), 64 to 67 (RVKT), 101 to 102 (CN), and 125 to 126 (DI). Lys-137 acts as the Proton donor/acceptor; for FAICAR cyclization activity in catalysis. Lys-199 is modified (N6-acetyllysine). The tract at residues 199–592 (KGISQMPLRY…AHTDLRLFHH (394 aa)) is AICAR formyltransferase. Residues 207-208 (RY), His-267, Gly-316, Asp-339, Asn-431, and Arg-451 each bind 5-amino-1-(5-phospho-beta-D-ribosyl)imidazole-4-carboxamide. His-267 functions as the Proton acceptor; for AICAR formyltransferase activity in the catalytic mechanism. Residue Ile-452 coordinates (6R)-10-formyltetrahydrofolate. A 5-amino-1-(5-phospho-beta-D-ribosyl)imidazole-4-carboxamide-binding site is contributed by Phe-541. Residues Asp-546 and 565–566 (ST) contribute to the (6R)-10-formyltetrahydrofolate site. Arg-588 lines the 5-amino-1-(5-phospho-beta-D-ribosyl)imidazole-4-carboxamide pocket.

Belongs to the PurH family. As to quaternary structure, homodimer. Associates with internalized INSR complexes on Golgi/endosomal membranes. Interacts with INSR; ATIC together with PRKAA2/AMPK2 and HACD3/PTPLAD1 is proposed to be part of a signaling network regulating INSR autophosphorylation and endocytosis. As to expression, expressed in liver.

The protein resides in the cytoplasm. The protein localises to the cytosol. It catalyses the reaction (6R)-10-formyltetrahydrofolate + 5-amino-1-(5-phospho-beta-D-ribosyl)imidazole-4-carboxamide = 5-formamido-1-(5-phospho-D-ribosyl)imidazole-4-carboxamide + (6S)-5,6,7,8-tetrahydrofolate. The catalysed reaction is 10-formyldihydrofolate + 5-amino-1-(5-phospho-beta-D-ribosyl)imidazole-4-carboxamide = 5-formamido-1-(5-phospho-D-ribosyl)imidazole-4-carboxamide + 7,8-dihydrofolate. It carries out the reaction IMP + H2O = 5-formamido-1-(5-phospho-D-ribosyl)imidazole-4-carboxamide. Its pathway is purine metabolism; IMP biosynthesis via de novo pathway; 5-formamido-1-(5-phospho-D-ribosyl)imidazole-4-carboxamide from 5-amino-1-(5-phospho-D-ribosyl)imidazole-4-carboxamide (10-formyl THF route): step 1/1. It functions in the pathway purine metabolism; IMP biosynthesis via de novo pathway; IMP from 5-formamido-1-(5-phospho-D-ribosyl)imidazole-4-carboxamide: step 1/1. Its activity is regulated as follows. AMP and XMP inhibit AICAR formyltransferase activity. Functionally, bifunctional enzyme that catalyzes the last two steps of purine biosynthesis. Acts as a transformylase that incorporates a formyl group to the AMP analog AICAR (5-amino-1-(5-phospho-beta-D-ribosyl)imidazole-4-carboxamide) to produce the intermediate formyl-AICAR (FAICAR). Can use both 10-formyldihydrofolate and 10-formyltetrahydrofolate as the formyl donor in this reaction. Also catalyzes the cyclization of FAICAR to inosine monophosphate (IMP). Promotes insulin receptor/INSR autophosphorylation and is involved in INSR internalization. The protein is Bifunctional purine biosynthesis protein ATIC (Atic) of Rattus norvegicus (Rat).